A 237-amino-acid chain; its full sequence is Phosphoribosylaminoimidazole-succinocarboxamide synthase (237 aa).

The protein belongs to the SAICAR synthetase family.

The enzyme catalyses 5-amino-1-(5-phospho-D-ribosyl)imidazole-4-carboxylate + L-aspartate + ATP = (2S)-2-[5-amino-1-(5-phospho-beta-D-ribosyl)imidazole-4-carboxamido]succinate + ADP + phosphate + 2 H(+). It functions in the pathway purine metabolism; IMP biosynthesis via de novo pathway; 5-amino-1-(5-phospho-D-ribosyl)imidazole-4-carboxamide from 5-amino-1-(5-phospho-D-ribosyl)imidazole-4-carboxylate: step 1/2. This Shigella sonnei (strain Ss046) protein is Phosphoribosylaminoimidazole-succinocarboxamide synthase.